Here is a 406-residue protein sequence, read N- to C-terminus: MPKRKAAGDVSQEPKRRSARLSAMPVPFTPELKPKRASTSRKTKTTNVVEENKDASTIPIPETKPEDVKDECNMENAENGEAKIMEAPIPKMEAEEVKEQINEDTEEDGGEKKEAVAAEAKDDELKANIQDVEKDEDGKEHKDTGEEVEDGKIEEEGLNEKPGTAKSEDAEVSKDEEEKGDNEKGEDGKEEGDEKEEEKDDKEGDTGTEKEVKEQNKEAEEDDGKCKEEENKEVGKEGQPEEDGKEDLHEEVGKEDLHEEDGKEGQPEEDGKEIHHEEDGKEGQPEEDGKEYLHEEDGEEGQPKEDQKEGQPEEDGKEDQPEEDGKEGQCKEDGKEGHHEEGGKEDLHEEDGKEKDGGKEDRKEEGEQEVAVDEGSDENKVEAEEEGAENKDFKQDGEKEEPLSIV.

Residues 1–406 (MPKRKAAGDV…GEKEEPLSIV (406 aa)) form a disordered region. A Phosphothreonine modification is found at threonine 29. Residues 35 to 44 (KRASTSRKTK) are compositionally biased toward basic residues. Composition is skewed to basic and acidic residues over residues 63–72 (TKPEDVKDEC), 92–101 (MEAEEVKEQI), 110–126 (GEKKEAVAAEAKDDELK), 136–159 (EDGKEHKDTGEEVEDGKIEEEGLN), and 166–187 (KSEDAEVSKDEEEKGDNEKGED). A Glycyl lysine isopeptide (Lys-Gly) (interchain with G-Cter in SUMO2) cross-link involves residue lysine 64. Lysine 98 participates in a covalent cross-link: Glycyl lysine isopeptide (Lys-Gly) (interchain with G-Cter in SUMO1); alternate. Lysine 98 participates in a covalent cross-link: Glycyl lysine isopeptide (Lys-Gly) (interchain with G-Cter in SUMO2); alternate. Residue lysine 121 forms a Glycyl lysine isopeptide (Lys-Gly) (interchain with G-Cter in SUMO2) linkage. Over residues 188–200 (GKEEGDEKEEEKD) the composition is skewed to acidic residues. Basic and acidic residues-rich tracts occupy residues 201-239 (DKEGDTGTEKEVKEQNKEAEEDDGKCKEEENKEVGKEGQ), 246-266 (EDLHEEVGKEDLHEEDGKEGQ), 272-284 (KEIHHEEDGKEGQ), and 290-311 (KEYLHEEDGEEGQPKEDQKEGQ). The span at 312 to 325 (PEEDGKEDQPEEDG) shows a compositional bias: acidic residues. A compositionally biased stretch (basic and acidic residues) spans 326-365 (KEGQCKEDGKEGHHEEGGKEDLHEEDGKEKDGGKEDRKEE). A compositionally biased stretch (acidic residues) spans 366-376 (GEQEVAVDEGS). Basic and acidic residues predominate over residues 377-406 (DENKVEAEEEGAENKDFKQDGEKEEPLSIV).

This sequence belongs to the HMGN family. As to expression, expressed in liver, spleen, lung, heart, kidney, muscle and brain (at protein level). Widely expressed with highest levels in submaxillary gland, thymus, kidney and liver and lowest levels in brain, lung, pancreas and eye.

The protein localises to the nucleus. Preferentially binds to euchromatin and modulates cellular transcription by counteracting linker histone-mediated chromatin compaction. This is High mobility group nucleosome-binding domain-containing protein 5 (Hmgn5) from Mus musculus (Mouse).